The chain runs to 146 residues: Flavodoxin (146 aa).

The region spanning 4-143 is the Flavodoxin-like domain; sequence ALIVYGSTTG…EVLDWAREVL (140 aa).

Belongs to the flavodoxin family. Requires FMN as cofactor.

Electron-transfer proteins that function in various electron transport systems in microorganisms. Functionally interchangeable with ferredoxin. The chain is Flavodoxin from Megalodesulfovibrio gigas (strain ATCC 19364 / DSM 1382 / NCIMB 9332 / VKM B-1759) (Desulfovibrio gigas).